The sequence spans 87 residues: Toxin Cll4 (87 aa).

An N-terminal signal peptide occupies residues 1 to 19 (MNSLLMITACLALIGTVWA). Positions 20–85 (KEGYIVNYHD…VWPLPKKRCN (66 aa)) constitute an LCN-type CS-alpha/beta domain. 4 cysteine pairs are disulfide-bonded: Cys-31–Cys-84, Cys-35–Cys-60, Cys-44–Cys-65, and Cys-48–Cys-67. Residue Asn-85 is modified to Asparagine amide.

The protein belongs to the long (4 C-C) scorpion toxin superfamily. Sodium channel inhibitor family. Beta subfamily. Expressed by the venom gland.

The protein localises to the secreted. In terms of biological role, beta toxins bind voltage-independently at site-4 of sodium channels (Nav) and shift the voltage of activation toward more negative potentials thereby affecting sodium channel activation and promoting spontaneous and repetitive firing. The sequence is that of Toxin Cll4 from Centruroides limpidus (Mexican scorpion).